The chain runs to 849 residues: uncharacterized protein (849 aa).

2 helical membrane-spanning segments follow: residues 587-607 (VALG…LGLF) and 620-640 (AGIL…TGDW).

Its subcellular location is the cell membrane. This is an uncharacterized protein from Methanocaldococcus jannaschii (strain ATCC 43067 / DSM 2661 / JAL-1 / JCM 10045 / NBRC 100440) (Methanococcus jannaschii).